The sequence spans 134 residues: Phosphoribosyl-AMP cyclohydrolase (134 aa).

A Mg(2+)-binding site is contributed by D80. A Zn(2+)-binding site is contributed by C81. Residues D82 and D84 each coordinate Mg(2+). Residues C98 and C105 each coordinate Zn(2+).

This sequence belongs to the PRA-CH family. Homodimer. It depends on Mg(2+) as a cofactor. Zn(2+) serves as cofactor.

It is found in the cytoplasm. It carries out the reaction 1-(5-phospho-beta-D-ribosyl)-5'-AMP + H2O = 1-(5-phospho-beta-D-ribosyl)-5-[(5-phospho-beta-D-ribosylamino)methylideneamino]imidazole-4-carboxamide. The protein operates within amino-acid biosynthesis; L-histidine biosynthesis; L-histidine from 5-phospho-alpha-D-ribose 1-diphosphate: step 3/9. Functionally, catalyzes the hydrolysis of the adenine ring of phosphoribosyl-AMP. The chain is Phosphoribosyl-AMP cyclohydrolase from Bordetella bronchiseptica (strain ATCC BAA-588 / NCTC 13252 / RB50) (Alcaligenes bronchisepticus).